The chain runs to 331 residues: MFMKDILQSSECIEDQQNISMRPNLLDEFIGQSSVVSNLKIFIDAAYERKEPIDHILLYGPPGLGKTTLAHIIAKELKVNFRSTAGPLLSKAGDLAAILTNLQARDVLFIDEIHRLNRNIEEILYSAMEDFSLDIIVGEGCGARTLRVDIPPFTLIGATTRIGLLSNPLRDRFGIPMHLEFYSTEELTKVIKRAAKVIHTNISNNGAEEISLRSRGTPRIALRLLRRIRDFISVTKQDTITHEFADQALLRLGIDKLGLDRQDIKYLQFIYEANNPIGIDTISSALSEDTGNIEETIEPYLIKINFIQRTPRGRVITQKAISYLNEQTYNM.

Residues 4–182 (KDILQSSECI…FGIPMHLEFY (179 aa)) are large ATPase domain (RuvB-L). Residues arginine 22, glycine 63, lysine 66, threonine 67, threonine 68, 129–131 (EDF), arginine 172, tyrosine 182, and arginine 219 each bind ATP. Threonine 67 is a binding site for Mg(2+). The segment at 183–253 (STEELTKVIK…FADQALLRLG (71 aa)) is small ATPAse domain (RuvB-S). Positions 256-331 (KLGLDRQDIK…SYLNEQTYNM (76 aa)) are head domain (RuvB-H). Arginine 309 and arginine 314 together coordinate DNA.

It belongs to the RuvB family. Homohexamer. Forms an RuvA(8)-RuvB(12)-Holliday junction (HJ) complex. HJ DNA is sandwiched between 2 RuvA tetramers; dsDNA enters through RuvA and exits via RuvB. An RuvB hexamer assembles on each DNA strand where it exits the tetramer. Each RuvB hexamer is contacted by two RuvA subunits (via domain III) on 2 adjacent RuvB subunits; this complex drives branch migration. In the full resolvosome a probable DNA-RuvA(4)-RuvB(12)-RuvC(2) complex forms which resolves the HJ.

Its subcellular location is the cytoplasm. It carries out the reaction ATP + H2O = ADP + phosphate + H(+). Functionally, the RuvA-RuvB-RuvC complex processes Holliday junction (HJ) DNA during genetic recombination and DNA repair, while the RuvA-RuvB complex plays an important role in the rescue of blocked DNA replication forks via replication fork reversal (RFR). RuvA specifically binds to HJ cruciform DNA, conferring on it an open structure. The RuvB hexamer acts as an ATP-dependent pump, pulling dsDNA into and through the RuvAB complex. RuvB forms 2 homohexamers on either side of HJ DNA bound by 1 or 2 RuvA tetramers; 4 subunits per hexamer contact DNA at a time. Coordinated motions by a converter formed by DNA-disengaged RuvB subunits stimulates ATP hydrolysis and nucleotide exchange. Immobilization of the converter enables RuvB to convert the ATP-contained energy into a lever motion, pulling 2 nucleotides of DNA out of the RuvA tetramer per ATP hydrolyzed, thus driving DNA branch migration. The RuvB motors rotate together with the DNA substrate, which together with the progressing nucleotide cycle form the mechanistic basis for DNA recombination by continuous HJ branch migration. Branch migration allows RuvC to scan DNA until it finds its consensus sequence, where it cleaves and resolves cruciform DNA. The protein is Holliday junction branch migration complex subunit RuvB of Ehrlichia ruminantium (strain Gardel).